The primary structure comprises 739 residues: MSSISLIQPDRDLFSWPQYWAACFGPAPFLPMSREEMDQLGWDSCDIILVTGDAYVDHPSFGMAICGRMLEAQGFRVGIIAQPDWSSKDDFMRLGKPNLFFGVTAGNMDSMINRYTADRRLRHDDAYTPDNVAGKRPDRATLVYTQRCKEAWKDVPVILGGIEASLRRTAHYDYWSDTVRRSVLVDSKADMLMFGNGERPLVEVAHRLAMGEPISEIRDVRNTAIIVKEALPGWSGVDSTRLDTPGKIDPIPHPYGEDLPCADNKPVAPKKQEAKAVTVQPPRPKPWEKTYVLLPSFEKVKGDKVLYAHASRILHHETNPGCARALMQKHGDRYVWINPPAIPLSTEEMDSVFALPYKRVPHPAYGNARIPAYEMIRFSVNIMRGCFGGCSFCSITEHEGRIIQSRSEDSIINEIEAIRDTVPGFTGVISDLGGPTANMYMLRCKSPRAEQTCRRLSCVYPDICPHMDTNHEPTINLYRRARDLKGIKKILIASGVRYDIAVEDPRYIKELATHHVGGYLKIAPEHTEEGPLSKMMKPGMGSYDRFKELFDTYSKQAGKEQYLIPYFISAHPGTRDEDMVNLALWLKKHRFRLDQVQNFYPSPLANSTTMYYTGKNPLAKIGYKSEDVFVPKGDKQRRLHKALLRYHDPANWPLIRQALEAMGKKHLIGSRRDCLVPAPTIEEMREARRQNRNTRPALTKHTPMATQCQTPATAKKASSTQSRPVNAGAKKRPKAAVGR.

Positions 372 to 650 (AYEMIRFSVN…KALLRYHDPA (279 aa)) constitute a Radical SAM core domain. [4Fe-4S] cluster-binding residues include Cys-386, Cys-390, and Cys-393. The interval 686–739 (EARRQNRNTRPALTKHTPMATQCQTPATAKKASSTQSRPVNAGAKKRPKAAVGR) is disordered. A compositionally biased stretch (polar residues) spans 704–724 (MATQCQTPATAKKASSTQSRP). Basic residues predominate over residues 729–739 (AKKRPKAAVGR).

The protein belongs to the UPF0313 family. [4Fe-4S] cluster is required as a cofactor.

This is UPF0313 protein YgiQ from Escherichia coli O157:H7.